The primary structure comprises 1017 residues: MGNLTMSRRTFVKTAAITGAAAAAFGASTHTALAEETYSSVSGNDTVAVKTCCRGCGKMECGVKVIVQNGRAIRVEGDEGAFQSMGNCCTKSQSSIQAAYHPDRLHYPMKRTNPKGEEPGWQRISWDEAMQSIVDNFMDIKAKHGGEAIACQVGTSRIWCMHSESILKNMLETPNNVEAWQICKGPRHFATTMVSQFAMSWMETITRPKVYVQWGGASELSNYDDSCRTTVDVASRADVHISVDPRMANMGKEADYWQHLRPGTDGALALAWTNVIIEKKLYDELYVKKWTNAPFLVCEDMEPSGFPTVRTDGSYWDVKTALLKESDIKEGGSPYKFLVYDNNWEKLKAEGVEHEYGAFTWFNADQEGVIDETGGFWEGENYDSEKARQGREAAQDNLLPGQTQGWLPDPMPFDPAIDPALEGEFEITLKDGKTVKVKPVWEHYKARAAEYKPEVAAEITGIPASEIEAAATAYGTRIDPSTGYGNGGIQYMLAVEHFCSAIQNCRAFDNLVGITGNMDTPGGNRGPTIVPIDGDLQGFSAWAPGATTPPEEVNRKQIGIDKFPLLGWWQYWCDSHSLWDAVITGDPYPVRALWNESGNFMSQTNTTRAWEALCSLDFYVDLNLWHTPQNDTADIILPVAHWIELNSPRASQGSAGAMGATVKCVQPPAEAKYDPEIVMDLARRMNWKWTDEPGNEWPDINWQLDDSIKLLTDDELTYTTWHVENGKPTFERHGVPMAEVTPKYKTWDEYVKAFQEHGWWQAKDIEPRNWGTYRRYQTGAMRARDRVWGRLDYTAGKGIGDWKPGWFTPTMKQEIWSTVMESHHPDHPEWRLPTYTEPPHGPKDGDRIKEYPLTATTGRRIPVYFHSEHRQLPWCRELWPVPRVEINPKTAAEYGIEQGDWVWIETEWGKIREVADLYYGVKEDVINLEHTWWYPEVKDAGHGWQFSQVNQLIDHYAQDPHSGTSNLRAYQVKIYKATPENSPFNNPVPCDSTGTPIIHTSDDPRLKEWLPTYEGRE.

Positions 1–34 (MGNLTMSRRTFVKTAAITGAAAAAFGASTHTALA) form a signal peptide, tat-type signal. The 4Fe-4S Mo/W bis-MGD-type domain occupies 45-103 (DTVAVKTCCRGCGKMECGVKVIVQNGRAIRVEGDEGAFQSMGNCCTKSQSSIQAAYHPD). [4Fe-4S] cluster contacts are provided by Cys53, Cys56, Cys61, and Cys89. Lys91 functions as the Electron donor/acceptor in the catalytic mechanism.

It belongs to the prokaryotic molybdopterin-containing oxidoreductase family. [4Fe-4S] cluster serves as cofactor. The cofactor is Mo-bis(molybdopterin guanine dinucleotide). Post-translationally, predicted to be exported by the Tat system. The position of the signal peptide cleavage has not been experimentally proven.

It catalyses the reaction dopamine + AH2 = 3-tyramine + A + H2O. In terms of biological role, involved in drug metabolism, as part of an interspecies gut bacterial pathway for Levodopa (L-dopa) metabolism, acting on dopamine produced by Enterecoccus L-dopa decarboxylase. Removes the para hydroxyl group of dopamine to produce m-tyramine (3-tyramine). It is possible that dopamine dehydroxylation influences the multiple side effects of L-dopa administration linked to dopamine production in the treatment of Parkinson's disease. This chain is Dopamine dehydroxylase, found in Eggerthella lenta (Eubacterium lentum).